The primary structure comprises 130 residues: Large ribosomal subunit protein bL12 (130 aa).

Belongs to the bacterial ribosomal protein bL12 family. As to quaternary structure, homodimer. Part of the ribosomal stalk of the 50S ribosomal subunit. Forms a multimeric L10(L12)X complex, where L10 forms an elongated spine to which 2 to 4 L12 dimers bind in a sequential fashion. Binds GTP-bound translation factors.

In terms of biological role, forms part of the ribosomal stalk which helps the ribosome interact with GTP-bound translation factors. Is thus essential for accurate translation. The chain is Large ribosomal subunit protein bL12 from Chlamydia trachomatis serovar L2 (strain ATCC VR-902B / DSM 19102 / 434/Bu).